A 146-amino-acid chain; its full sequence is uncharacterized protein (146 aa).

This is an uncharacterized protein from Orgyia pseudotsugata multicapsid polyhedrosis virus (OpMNPV).